Consider the following 223-residue polypeptide: Imidazoleglycerol-phosphate dehydratase (223 aa).

This sequence belongs to the imidazoleglycerol-phosphate dehydratase family.

The catalysed reaction is D-erythro-1-(imidazol-4-yl)glycerol 3-phosphate = 3-(imidazol-4-yl)-2-oxopropyl phosphate + H2O. It participates in amino-acid biosynthesis; L-histidine biosynthesis; L-histidine from 5-phospho-alpha-D-ribose 1-diphosphate: step 6/9. In Torulaspora delbrueckii (Yeast), this protein is Imidazoleglycerol-phosphate dehydratase (HIS3).